Reading from the N-terminus, the 835-residue chain is Beta-galactosidase (835 aa).

Residues 1–22 (MGFWMAMLLMLLLCLWVSCGIA) form the signal peptide. Glu180 (proton donor) is an active-site residue. Glu249 serves as the catalytic Nucleophile. Residues 749–835 (RPLRPKAHLK…KKLSVEAICS (87 aa)) enclose the SUEL-type lectin domain.

Belongs to the glycosyl hydrolase 35 family.

It carries out the reaction Hydrolysis of terminal non-reducing beta-D-galactose residues in beta-D-galactosides.. Involved in cell wall degradation. Degrades polysaccharides containing beta-(1--&gt;4)-linked galactans, acting as an exo-(1--&gt;4)-beta-D-galactanase. The chain is Beta-galactosidase from Solanum lycopersicum (Tomato).